A 224-amino-acid chain; its full sequence is Holliday junction branch migration complex subunit RuvA (224 aa).

Residues Met-1–Pro-64 form a domain I region. The interval Thr-65–Ala-143 is domain II. The disordered stretch occupies residues Gly-141–Asn-185. The segment at Ala-144–Pro-170 is flexible linker. The domain III stretch occupies residues Pro-171–Ser-224.

Belongs to the RuvA family. In terms of assembly, homotetramer. Forms an RuvA(8)-RuvB(12)-Holliday junction (HJ) complex. HJ DNA is sandwiched between 2 RuvA tetramers; dsDNA enters through RuvA and exits via RuvB. An RuvB hexamer assembles on each DNA strand where it exits the tetramer. Each RuvB hexamer is contacted by two RuvA subunits (via domain III) on 2 adjacent RuvB subunits; this complex drives branch migration. In the full resolvosome a probable DNA-RuvA(4)-RuvB(12)-RuvC(2) complex forms which resolves the HJ.

It localises to the cytoplasm. Its function is as follows. The RuvA-RuvB-RuvC complex processes Holliday junction (HJ) DNA during genetic recombination and DNA repair, while the RuvA-RuvB complex plays an important role in the rescue of blocked DNA replication forks via replication fork reversal (RFR). RuvA specifically binds to HJ cruciform DNA, conferring on it an open structure. The RuvB hexamer acts as an ATP-dependent pump, pulling dsDNA into and through the RuvAB complex. HJ branch migration allows RuvC to scan DNA until it finds its consensus sequence, where it cleaves and resolves the cruciform DNA. This Cereibacter sphaeroides (strain KD131 / KCTC 12085) (Rhodobacter sphaeroides) protein is Holliday junction branch migration complex subunit RuvA.